The chain runs to 234 residues: Leucyl/phenylalanyl-tRNA--protein transferase (234 aa).

The protein belongs to the L/F-transferase family.

The protein resides in the cytoplasm. The catalysed reaction is N-terminal L-lysyl-[protein] + L-leucyl-tRNA(Leu) = N-terminal L-leucyl-L-lysyl-[protein] + tRNA(Leu) + H(+). It carries out the reaction N-terminal L-arginyl-[protein] + L-leucyl-tRNA(Leu) = N-terminal L-leucyl-L-arginyl-[protein] + tRNA(Leu) + H(+). The enzyme catalyses L-phenylalanyl-tRNA(Phe) + an N-terminal L-alpha-aminoacyl-[protein] = an N-terminal L-phenylalanyl-L-alpha-aminoacyl-[protein] + tRNA(Phe). Functionally, functions in the N-end rule pathway of protein degradation where it conjugates Leu, Phe and, less efficiently, Met from aminoacyl-tRNAs to the N-termini of proteins containing an N-terminal arginine or lysine. This chain is Leucyl/phenylalanyl-tRNA--protein transferase, found in Klebsiella pneumoniae (strain 342).